A 430-amino-acid chain; its full sequence is Histidine--tRNA ligase (430 aa).

It belongs to the class-II aminoacyl-tRNA synthetase family. As to quaternary structure, homodimer.

The protein localises to the cytoplasm. The catalysed reaction is tRNA(His) + L-histidine + ATP = L-histidyl-tRNA(His) + AMP + diphosphate + H(+). The polypeptide is Histidine--tRNA ligase (Chlamydia caviae (strain ATCC VR-813 / DSM 19441 / 03DC25 / GPIC) (Chlamydophila caviae)).